Reading from the N-terminus, the 188-residue chain is UPF0301 protein Smlt1098 (188 aa).

Belongs to the UPF0301 (AlgH) family.

The chain is UPF0301 protein Smlt1098 from Stenotrophomonas maltophilia (strain K279a).